We begin with the raw amino-acid sequence, 720 residues long: Methionine--tRNA ligase (720 aa).

The 'HIGH' region signature appears at 27-37; it reads PYANGQIHIGH. Zn(2+) contacts are provided by cysteine 158, cysteine 161, cysteine 171, and cysteine 174. The 'KMSKS' region signature appears at 348–352; sequence KMSKS. Residue lysine 351 coordinates ATP. One can recognise a tRNA-binding domain in the interval 614–720; that stretch reads DFAKVDLRIA…SGAKPGMRVK (107 aa).

This sequence belongs to the class-I aminoacyl-tRNA synthetase family. MetG type 1 subfamily. Homodimer. Zn(2+) serves as cofactor.

Its subcellular location is the cytoplasm. The catalysed reaction is tRNA(Met) + L-methionine + ATP = L-methionyl-tRNA(Met) + AMP + diphosphate. Is required not only for elongation of protein synthesis but also for the initiation of all mRNA translation through initiator tRNA(fMet) aminoacylation. In Burkholderia ambifaria (strain ATCC BAA-244 / DSM 16087 / CCUG 44356 / LMG 19182 / AMMD) (Burkholderia cepacia (strain AMMD)), this protein is Methionine--tRNA ligase.